Consider the following 76-residue polypeptide: Translational regulator CsrA (76 aa).

The protein belongs to the CsrA/RsmA family. As to quaternary structure, homodimer; the beta-strands of each monomer intercalate to form a hydrophobic core, while the alpha-helices form wings that extend away from the core.

The protein localises to the cytoplasm. A translational regulator that binds mRNA to regulate translation initiation and/or mRNA stability. Usually binds in the 5'-UTR at or near the Shine-Dalgarno sequence preventing ribosome-binding, thus repressing translation. Its main target seems to be the major flagellin gene, while its function is anatagonized by FliW. The polypeptide is Translational regulator CsrA (Pseudothermotoga lettingae (strain ATCC BAA-301 / DSM 14385 / NBRC 107922 / TMO) (Thermotoga lettingae)).